We begin with the raw amino-acid sequence, 92 residues long: MDKEAKYVYIPDQEGNDVKFEVIIYFEIEKLKGQYIIATPAFEETDEAYAFKIFKDEDGSDIFIALEDDDEEFEMVLETYETLMNEDGLIEE.

The protein belongs to the UPF0473 family.

The protein is UPF0473 protein Cbei_1107 of Clostridium beijerinckii (strain ATCC 51743 / NCIMB 8052) (Clostridium acetobutylicum).